Consider the following 498-residue polypeptide: Ribulose bisphosphate carboxylase large chain (498 aa).

Residues Met1 to Ser2 constitute a propeptide that is removed on maturation. N-acetylproline is present on Pro3. Lys14 is subject to N6,N6,N6-trimethyllysine. Residues Asn123 and Thr173 each contribute to the substrate site. Lys175 serves as the catalytic Proton acceptor. Lys177 is a binding site for substrate. Positions 201, 203, and 204 each coordinate Mg(2+). The residue at position 201 (Lys201) is an N6-carboxylysine. His294 functions as the Proton acceptor in the catalytic mechanism. Residues Arg295, His327, and Ser379 each coordinate substrate. The segment at Asp473–Gly498 is disordered.

The protein belongs to the RuBisCO large chain family. Type I subfamily. In terms of assembly, heterohexadecamer of 8 large chains and 8 small chains; disulfide-linked. The disulfide link is formed within the large subunit homodimers. Mg(2+) serves as cofactor. The disulfide bond which can form in the large chain dimeric partners within the hexadecamer appears to be associated with oxidative stress and protein turnover.

It localises to the plastid. It catalyses the reaction 2 (2R)-3-phosphoglycerate + 2 H(+) = D-ribulose 1,5-bisphosphate + CO2 + H2O. The enzyme catalyses D-ribulose 1,5-bisphosphate + O2 = 2-phosphoglycolate + (2R)-3-phosphoglycerate + 2 H(+). In terms of biological role, ruBisCO catalyzes two reactions: the carboxylation of D-ribulose 1,5-bisphosphate, the primary event in carbon dioxide fixation, as well as the oxidative fragmentation of the pentose substrate in the photorespiration process. Both reactions occur simultaneously and in competition at the same active site. The sequence is that of Ribulose bisphosphate carboxylase large chain from Cuscuta exaltata (Tall dodder).